The chain runs to 307 residues: Protoheme IX farnesyltransferase (307 aa).

8 helical membrane passes run 24-44 (ISLLKPRVMSLVIFTALVGLV), 52-72 (PVIAFTAILCIAVGAGAAGAL), 115-135 (VVLGLLVNVLAGALLAFTIFF), 152-172 (IVIGGLSGALPPMVAWAAASG), 179-199 (VILVAIIFFWTPPHFWALSLY), 224-244 (QILLYTLFLVPLALSPVMLGE), 245-265 (AGLAYGVVAGVTGLGMLLLAV), and 284-304 (FGFSILYLFLLFATLLAEALV).

Belongs to the UbiA prenyltransferase family. Protoheme IX farnesyltransferase subfamily.

The protein localises to the cell inner membrane. The catalysed reaction is heme b + (2E,6E)-farnesyl diphosphate + H2O = Fe(II)-heme o + diphosphate. The protein operates within porphyrin-containing compound metabolism; heme O biosynthesis; heme O from protoheme: step 1/1. Converts heme B (protoheme IX) to heme O by substitution of the vinyl group on carbon 2 of heme B porphyrin ring with a hydroxyethyl farnesyl side group. This Azorhizobium caulinodans (strain ATCC 43989 / DSM 5975 / JCM 20966 / LMG 6465 / NBRC 14845 / NCIMB 13405 / ORS 571) protein is Protoheme IX farnesyltransferase.